Consider the following 62-residue polypeptide: Large ribosomal subunit protein bL28 (62 aa).

Belongs to the bacterial ribosomal protein bL28 family.

The sequence is that of Large ribosomal subunit protein bL28 from Thermoanaerobacter sp. (strain X514).